The chain runs to 185 residues: Large ribosomal subunit protein uL5 (185 aa).

The protein belongs to the universal ribosomal protein uL5 family. In terms of assembly, part of the 50S ribosomal subunit; part of the 5S rRNA/L5/L18/L25 subcomplex. Contacts the 5S rRNA and the P site tRNA. Forms a bridge to the 30S subunit in the 70S ribosome.

Functionally, this is one of the proteins that bind and probably mediate the attachment of the 5S RNA into the large ribosomal subunit, where it forms part of the central protuberance. In the 70S ribosome it contacts protein S13 of the 30S subunit (bridge B1b), connecting the 2 subunits; this bridge is implicated in subunit movement. Contacts the P site tRNA; the 5S rRNA and some of its associated proteins might help stabilize positioning of ribosome-bound tRNAs. The chain is Large ribosomal subunit protein uL5 from Parabacteroides distasonis (strain ATCC 8503 / DSM 20701 / CIP 104284 / JCM 5825 / NCTC 11152).